A 44-amino-acid polypeptide reads, in one-letter code: Conotoxin Sr5.5 (44 aa).

The signal sequence occupies residues 1-19 (MRCLPVFVILLLLIASAPS). Positions 20–29 (VDDNAKGTQH) are excised as a propeptide.

Belongs to the conotoxin T superfamily. In terms of processing, contains 2 disulfide bonds that can be either 'C1-C3, C2-C4' or 'C1-C4, C2-C3', since these disulfide connectivities have been observed for conotoxins with cysteine framework V (for examples, see AC P0DQQ7 and AC P81755). As to expression, expressed by the venom duct.

The protein localises to the secreted. The chain is Conotoxin Sr5.5 from Conus spurius (Alphabet cone).